The following is a 360-amino-acid chain: Photosystem II protein D1 (360 aa).

A run of 3 helical transmembrane segments spans residues 29-46 (YIGWFGVLMIPTLLTATS), 118-133 (HFLLGVSCYIGREWEL), and 142-156 (WISVAFTAPVAAAAA). His-118 provides a ligand contact to chlorophyll a. Residue Tyr-126 coordinates pheophytin a. [CaMn4O5] cluster-binding residues include Asp-170 and Glu-189. Residues 197–218 (FHQLGVAGVFGGSLFSAMHGSL) traverse the membrane as a helical segment. His-198 is a binding site for chlorophyll a. A quinone-binding positions include His-215 and 264–265 (SF). His-215 lines the Fe cation pocket. Residue His-272 participates in Fe cation binding. Residues 274 to 288 (FLGLWPVVGIWFTAM) form a helical membrane-spanning segment. 4 residues coordinate [CaMn4O5] cluster: His-332, Glu-333, Asp-342, and Ala-344. The propeptide occupies 345-360 (SSNSLPVSLVAPSVNG).

The protein belongs to the reaction center PufL/M/PsbA/D family. As to quaternary structure, PSII is composed of 1 copy each of membrane proteins PsbA, PsbB, PsbC, PsbD, PsbE, PsbF, PsbH, PsbI, PsbJ, PsbK, PsbL, PsbM, PsbT, PsbX, PsbY, PsbZ, Psb30/Ycf12, at least 3 peripheral proteins of the oxygen-evolving complex and a large number of cofactors. It forms dimeric complexes. The cofactor is The D1/D2 heterodimer binds P680, chlorophylls that are the primary electron donor of PSII, and subsequent electron acceptors. It shares a non-heme iron and each subunit binds pheophytin, quinone, additional chlorophylls, carotenoids and lipids. D1 provides most of the ligands for the Mn4-Ca-O5 cluster of the oxygen-evolving complex (OEC). There is also a Cl(-1) ion associated with D1 and D2, which is required for oxygen evolution. The PSII complex binds additional chlorophylls, carotenoids and specific lipids.. In terms of processing, tyr-161 forms a radical intermediate that is referred to as redox-active TyrZ, YZ or Y-Z. C-terminally processed by CTPA; processing is essential to allow assembly of the oxygen-evolving complex and thus photosynthetic growth.

It localises to the plastid. Its subcellular location is the chloroplast thylakoid membrane. The enzyme catalyses 2 a plastoquinone + 4 hnu + 2 H2O = 2 a plastoquinol + O2. Functionally, photosystem II (PSII) is a light-driven water:plastoquinone oxidoreductase that uses light energy to abstract electrons from H(2)O, generating O(2) and a proton gradient subsequently used for ATP formation. It consists of a core antenna complex that captures photons, and an electron transfer chain that converts photonic excitation into a charge separation. The D1/D2 (PsbA/PsbD) reaction center heterodimer binds P680, the primary electron donor of PSII as well as several subsequent electron acceptors. This Gracilaria tenuistipitata var. liui (Red alga) protein is Photosystem II protein D1.